We begin with the raw amino-acid sequence, 306 residues long: Glutathione transport system permease protein GsiC (306 aa).

Over 1-8 the chain is Cytoplasmic; that stretch reads MLNYVIKR. The helical transmembrane segment at 9–29 threads the bilayer; the sequence is LLGLIPTLFIVSVLVFLFVHM. At 30–102 the chain is on the periplasmic side; it reads LPGDPARLIA…SRFMPTLWLT (73 aa). The ABC transmembrane type-1 domain occupies 95–292; it reads FMPTLWLTIT…LEFILINLVV (198 aa). Residues 103-123 traverse the membrane as a helical segment; it reads ITSMVWAVIFGMAAGIIAAVW. Over 124 to 134 the chain is Cytoplasmic; it reads RNRWPDRLSMT. The helical transmembrane segment at 135–155 threads the bilayer; sequence IAVSGISFPAFALGMLLIQVF. Topologically, residues 156 to 168 are periplasmic; sequence SVELGWLPTVGAD. Residues 169 to 189 traverse the membrane as a helical segment; the sequence is SWQHYILPSLTLGAAVAAVMA. Residues 190–228 lie on the Cytoplasmic side of the membrane; sequence RFTRASFVDVLSEDYMRTARAKGVSETWVVLKHGLRNAM. Residues 229–249 form a helical membrane-spanning segment; the sequence is IPVVTMMGLQFGFLLGGSIVV. The Periplasmic segment spans residues 250 to 277; it reads EKVFNWPGLGRLLVDSVEMRDYPVIQAE. Residues 278 to 298 traverse the membrane as a helical segment; it reads ILLFSLEFILINLVVDVLYAA. The Cytoplasmic portion of the chain corresponds to 299–306; it reads INPAIRYK.

The protein belongs to the binding-protein-dependent transport system permease family. As to quaternary structure, the complex is composed of two ATP-binding proteins (GsiA), two transmembrane proteins (GsiC and GsiD) and a solute-binding protein (GsiB).

It localises to the cell inner membrane. Its function is as follows. Part of the ABC transporter complex GsiABCD involved in glutathione import. Probably responsible for the translocation of the substrate across the membrane. This is Glutathione transport system permease protein GsiC from Escherichia coli O6:H1 (strain CFT073 / ATCC 700928 / UPEC).